The primary structure comprises 234 residues: Interleukin-27 subunit alpha (234 aa).

The signal sequence occupies residues 1-28 (MGQVTGDLGWRLSLLLLPLLLVQAGSWG). A glycan (N-linked (GlcNAc...) asparagine) is linked at asparagine 85. Positions 160–185 (KEEEDKEEEEEEEEEEKKLPLGALGG) are disordered. Acidic residues predominate over residues 161–174 (EEEDKEEEEEEEEE).

This sequence belongs to the IL-6 superfamily. In terms of assembly, heterodimer with EBI3; not disulfide-linked. This heterodimer is known as interleukin IL-27. In terms of processing, O-glycosylated. Expressed in macrophages and dendritic cells.

The protein resides in the secreted. Associates with EBI3 to form the IL-27 interleukin, a heterodimeric cytokine which functions in innate immunity. IL-27 has pro- and anti-inflammatory properties, that can regulate T-helper cell development, suppress T-cell proliferation, stimulate cytotoxic T-cell activity, induce isotype switching in B-cells, and that has diverse effects on innate immune cells. Among its target cells are CD4 T-helper cells which can differentiate in type 1 effector cells (TH1), type 2 effector cells (TH2) and IL17 producing helper T-cells (TH17). It drives rapid clonal expansion of naive but not memory CD4 T-cells. It also strongly synergizes with IL-12 to trigger interferon-gamma/IFN-gamma production of naive CD4 T-cells, binds to the cytokine receptor WSX-1/TCCR which appears to be required but not sufficient for IL-27-mediated signal transduction. IL-27 potentiate the early phase of TH1 response and suppress TH2 and TH17 differentiation. It induces the differentiation of TH1 cells via two distinct pathways, p38 MAPK/TBX21- and ICAM1/ITGAL/ERK-dependent pathways. It also induces STAT1, STAT3, STAT4 and STAT5 phosphorylation and activates TBX21/T-Bet via STAT1 with resulting IL12RB2 up-regulation, an event crucial to TH1 cell commitment. It suppresses the expression of GATA3, the inhibitor TH1 cells development. In CD8 T-cells, it activates STATs as well as GZMB. IL-27 reveals to be a potent inhibitor of TH17 cell development and of IL-17 production. Indeed IL27 alone is also able to inhibit the production of IL17 by CD4 and CD8 T-cells. While IL-27 suppressed the development of pro-inflammatory Th17 cells via STAT1, it inhibits the development of anti-inflammatory inducible regulatory T-cells, iTreg, independently of STAT1. IL-27 also has an effect on cytokine production, it suppresses pro-inflammatory cytokine production such as IL2, IL4, IL5 and IL6 and activates suppressors of cytokine signaling such as SOCS1 and SOCS3. Apart from suppression of cytokine production, IL-27 also antagonizes the effects of some cytokines such as IL6 through direct effects on T-cells. Another important role of IL-27 is its antitumor activity as well as its antiangiogenic activity with activation of production of antiangiogenic chemokines such as IP-10/CXCL10 and MIG/CXCL9. The protein is Interleukin-27 subunit alpha (Il27) of Mus musculus (Mouse).